The chain runs to 364 residues: DNA replication and repair protein RecF (364 aa).

30-37 (GNNAQGKT) contributes to the ATP binding site.

Belongs to the RecF family.

It is found in the cytoplasm. The RecF protein is involved in DNA metabolism; it is required for DNA replication and normal SOS inducibility. RecF binds preferentially to single-stranded, linear DNA. It also seems to bind ATP. This chain is DNA replication and repair protein RecF, found in Clostridium botulinum (strain Langeland / NCTC 10281 / Type F).